The chain runs to 105 residues: uncharacterized protein (105 aa).

The segment at 47 to 105 is disordered; it reads ENASAPRIQPSVTPSPAAPPSTDQLMMEKMMGSAGLNKYRKQEKEKQEEDGNGESLFDF. Residues 86 to 95 show a composition bias toward basic and acidic residues; sequence RKQEKEKQEE.

This is an uncharacterized protein from Bacillus subtilis (strain 168).